The primary structure comprises 427 residues: Interleukin-13 receptor subunit alpha-1 (427 aa).

Positions 1–21 (MEWPARLCGLWALLLCAGGGG) are cleaved as a signal peptide. Residues 22-343 (GGGGAAPTET…MSIGKKRNST (322 aa)) lie on the Extracellular side of the membrane. Fibronectin type-III domains are found at residues 34 to 123 (PVTN…PPEG), 128 to 226 (AVTE…TSRV), and 227 to 339 (KPDP…IGKK). Residues Asn37 and Asn61 are each glycosylated (N-linked (GlcNAc...) asparagine). 3 disulfide bridges follow: Cys62–Cys102, Cys95–Cys117, and Cys134–Cys144. Residues Asn105, Asn138, and Asn157 are each glycosylated (N-linked (GlcNAc...) asparagine). Cys173 and Cys185 form a disulfide bridge. N-linked (GlcNAc...) asparagine glycosylation is found at Asn235, Asn265, Asn293, Asn329, and Asn341. 2 disulfide bridges follow: Cys257–Cys320 and Cys282–Cys296. The short motif at 327 to 331 (WSNWS) is the WSXWS motif element. A helical transmembrane segment spans residues 344 to 367 (LYITMLLIVPVIVAGAIIVLLLYL). Residues 368–427 (KRLKIIIFPPIPDPGKIFKEMFGDQNDDTLHWKKYDIYEKQTKEETDSVVLIENLKKASQ) lie on the Cytoplasmic side of the membrane. The Box 1 motif signature appears at 374 to 382 (IFPPIPDPG).

It belongs to the type I cytokine receptor family. Type 5 subfamily. As to quaternary structure, interleukin-13 receptor is a complex of IL4R, IL13RA1, and possibly other components. Interacts with TRAF3IP1. Interacts with IL4. Ubiquitous. Highest levels in heart, liver, skeletal muscle and ovary; lowest levels in brain, lung and kidney. Also found in B-cells, T-cells and endothelial cells.

It is found in the membrane. In terms of biological role, binds with low affinity to interleukin-13 (IL13). Together with IL4RA can form a functional receptor for IL13. Also serves as an alternate accessory protein to the common cytokine receptor gamma chain for interleukin-4 (IL4) signaling, but cannot replace the function of IL2RG in allowing enhanced interleukin-2 (IL2) binding activity. This Homo sapiens (Human) protein is Interleukin-13 receptor subunit alpha-1 (IL13RA1).